Reading from the N-terminus, the 305-residue chain is Aquaporin-1 (305 aa).

The segment at 1–34 (MSSNDSNDTDKQHTRLDPTGVDDAYIPPEQPETK) is disordered. Residues 1–48 (MSSNDSNDTDKQHTRLDPTGVDDAYIPPEQPETKHHRFKISRDTLRDH) are Cytoplasmic-facing. A helical membrane pass occupies residues 49-69 (FIAAVGEFCGTFMFLWCAYVI). Topologically, residues 70–91 (CNVANHDVALVAAPDGSHPGQL) are extracellular. Residues 92–112 (IMIAIGFGFSVMFSIWCFAGV) form a helical membrane-spanning segment. Residues 113–136 (SGGALNPAMSLSLCLARAVSPTRC) lie on the Cytoplasmic side of the membrane. Residues 118–120 (NPA) carry the NPA 1 motif. A helical membrane pass occupies residues 137-157 (VVMWVSQIVAGMAAGGAASAM). The Extracellular segment spans residues 158–176 (TPGEVLFANSLGLGCSRTR). Residues 177–197 (GLFLEMFGTAILCLTVLMTAV) traverse the membrane as a helical segment. Residues 198-203 (EKRETN) lie on the Cytoplasmic side of the membrane. Residues 204–224 (FMAALPIGISLFIAHVALTAY) traverse the membrane as a helical segment. Residues 225-248 (TGTGVNPARSLGAAVAARYFPHYH) lie on the Extracellular side of the membrane. The NPA 2 signature appears at 230–232 (NPA). A helical membrane pass occupies residues 249–269 (WIYWIGTLLGSILAWSVWQLL). Residues 270–305 (QILDYTTYVTAEKAASTKEKAQKKGETSSSSAVAEV) lie on the Cytoplasmic side of the membrane. The segment covering 286–295 (TKEKAQKKGE) has biased composition (basic and acidic residues). The disordered stretch occupies residues 286–305 (TKEKAQKKGETSSSSAVAEV). The segment covering 296-305 (TSSSSAVAEV) has biased composition (polar residues).

Belongs to the MIP/aquaporin (TC 1.A.8) family.

Its subcellular location is the endoplasmic reticulum membrane. It localises to the cell membrane. Its function is as follows. Water channel required to facilitate the transport of water across membranes. Involved in sporulation, freeze tolerance and osmotolerance. Is non-functional in most laboratory strains. The chain is Aquaporin-1 (AQY1) from Saccharomyces cerevisiae (strain ATCC 204508 / S288c) (Baker's yeast).